A 426-amino-acid chain; its full sequence is Glutamate-1-semialdehyde 2,1-aminomutase (426 aa).

K265 carries the post-translational modification N6-(pyridoxal phosphate)lysine.

This sequence belongs to the class-III pyridoxal-phosphate-dependent aminotransferase family. HemL subfamily. In terms of assembly, homodimer. Pyridoxal 5'-phosphate serves as cofactor.

It localises to the cytoplasm. The enzyme catalyses (S)-4-amino-5-oxopentanoate = 5-aminolevulinate. It functions in the pathway porphyrin-containing compound metabolism; protoporphyrin-IX biosynthesis; 5-aminolevulinate from L-glutamyl-tRNA(Glu): step 2/2. The polypeptide is Glutamate-1-semialdehyde 2,1-aminomutase (Salmonella agona (strain SL483)).